Here is a 548-residue protein sequence, read N- to C-terminus: DNA ligase (548 aa).

An ATP-binding site is contributed by glutamate 196. Residue lysine 198 is the N6-AMP-lysine intermediate of the active site. The ATP site is built by arginine 203, arginine 218, glutamate 250, and phenylalanine 284. Glutamate 250 serves as a coordination point for a divalent metal cation. Glutamate 345 contributes to the a divalent metal cation binding site. Positions 361 and 365 each coordinate ATP. The tract at residues 515 to 548 (EQLIRNSQENTKKTFARLATTYDGPSPNKKLKLN) is disordered.

This sequence belongs to the ATP-dependent DNA ligase family. The cofactor is a divalent metal cation.

It catalyses the reaction ATP + (deoxyribonucleotide)n-3'-hydroxyl + 5'-phospho-(deoxyribonucleotide)m = (deoxyribonucleotide)n+m + AMP + diphosphate.. Able to ligate a double-stranded synthetic DNA substrate containing a single nick and inefficiently ligated a 1 nucleotide gap but did not ligate a 2 nucleotide gap. It is able to ligate short, complementary overhangs but not blunt-ended double-stranded DNA. May be implicated in DNA repair and recombination. The protein is DNA ligase (LIG) of Lepidoptera (butterflies and moths).